The chain runs to 107 residues: MGGHVDVLDFLIMSGVGIEFTYAVTTASCYNKLSVIKYLHNQNYVINFTFALQEASCRGFVDIVEFLLTNCLDKIDTYHIKIILKSVILGRHNDIVKVYMDNGFYQE.

This is an uncharacterized protein from Acanthamoeba polyphaga mimivirus (APMV).